A 302-amino-acid polypeptide reads, in one-letter code: Stanniocalcin-2 (302 aa).

The N-terminal stretch at 1 to 24 (MCAERLGQFMTLALVLATFDPARG) is a signal peptide. Residues 23-44 (RGTDATNPPEGPQDRSSQQKGR) are disordered. N-linked (GlcNAc...) asparagine glycosylation occurs at asparagine 73. Positions 217-302 (KPPTAPPERQ…EQSEYSDIRR (86 aa)) are disordered. Over residues 227 to 264 (PQVDRTKLSRAHHGEAGHHLPEPSSRETGRGAKGERGS) the composition is skewed to basic and acidic residues. Phosphoserine; by FAM20C occurs at positions 250 and 251. The residue at position 254 (threonine 254) is a Phosphothreonine; by FAM20C.

This sequence belongs to the stanniocalcin family. As to quaternary structure, homodimer; disulfide-linked. In terms of tissue distribution, expressed in a variety of tissues including muscle, heart, pancreas, kidney, spleen, prostate, small intestine, colon and peripheral blood leukocytes.

It is found in the secreted. Functionally, has an anti-hypocalcemic action on calcium and phosphate homeostasis. The protein is Stanniocalcin-2 (STC2) of Homo sapiens (Human).